The following is a 371-amino-acid chain: MLKFTLHKKDGLARRGTLELNHGKIETPVFMPVGTYGSVKAMNPQNLHDIKAQIILGNTYHLWLRPGLEVVEQFGGLHGFIGWDKPILTDSGGFQVFSLSDMRKLTEEGCTFKSPINGDKLFLSPEISMKIQTVLNSDIAMQLDECTPGETTREQARKSLQMSLRWAERSKKAFEDLKNPNALFGIVQGAMYEDLREESLRGLEEFDFPGLAVGGLSVGEPKPEMYRMLHAVGPMLPERKPHYLMGVGTPEDLVYGVAHGIDMFDCVMPTRNARNGWLFTRFGDLKIKNAKHKPDKRPIDESCTCYACQNFSRAYLHHLHRAGEILGAQLNTIHNLHFYQVIMAEMRDAVEQGKFADWQAQFHENRARGVD.

The active-site Proton acceptor is the D90. Residues 90–94 (DSGGF), D144, Q188, and G215 contribute to the substrate site. The RNA binding stretch occupies residues 246 to 252 (GVGTPED). Residue D265 is the Nucleophile of the active site. The segment at 270–274 (TRNAR) is RNA binding; important for wobble base 34 recognition. 4 residues coordinate Zn(2+): C303, C305, C308, and H334.

Belongs to the queuine tRNA-ribosyltransferase family. In terms of assembly, homodimer. Within each dimer, one monomer is responsible for RNA recognition and catalysis, while the other monomer binds to the replacement base PreQ1. Zn(2+) serves as cofactor.

The catalysed reaction is 7-aminomethyl-7-carbaguanine + guanosine(34) in tRNA = 7-aminomethyl-7-carbaguanosine(34) in tRNA + guanine. The protein operates within tRNA modification; tRNA-queuosine biosynthesis. In terms of biological role, catalyzes the base-exchange of a guanine (G) residue with the queuine precursor 7-aminomethyl-7-deazaguanine (PreQ1) at position 34 (anticodon wobble position) in tRNAs with GU(N) anticodons (tRNA-Asp, -Asn, -His and -Tyr). Catalysis occurs through a double-displacement mechanism. The nucleophile active site attacks the C1' of nucleotide 34 to detach the guanine base from the RNA, forming a covalent enzyme-RNA intermediate. The proton acceptor active site deprotonates the incoming PreQ1, allowing a nucleophilic attack on the C1' of the ribose to form the product. After dissociation, two additional enzymatic reactions on the tRNA convert PreQ1 to queuine (Q), resulting in the hypermodified nucleoside queuosine (7-(((4,5-cis-dihydroxy-2-cyclopenten-1-yl)amino)methyl)-7-deazaguanosine). This chain is Queuine tRNA-ribosyltransferase, found in Neisseria gonorrhoeae (strain ATCC 700825 / FA 1090).